A 243-amino-acid polypeptide reads, in one-letter code: Toxin CcTX-1 (243 aa).

Residues 1-25 (SSPEKKNDMSKPGRMRFDNKKEPRS) are compositionally biased toward basic and acidic residues. Positions 1–48 (SSPEKKNDMSKPGRMRFDNKKEPRSSAKNSGNGYGCVDVNAGREPLTG) are disordered.

Post-translationally, contains disulfide bonds. As to expression, nematocytes.

The protein localises to the secreted. It is found in the nematocyst. Its subcellular location is the target cell membrane. Has potent hemolytic activity. Is lethal to crayfish. Causes cutaneous inflammation in humans. May act as a pore-forming toxin, disrupting normal transmembrane ion concentration gradients in susceptible cells. The chain is Toxin CcTX-1 from Cyanea capillata (Lion's mane jellyfish).